The chain runs to 288 residues: Homoserine kinase (288 aa).

Position 78–88 (78–88 (PLARGLGSSSS)) interacts with ATP.

The protein belongs to the GHMP kinase family. Homoserine kinase subfamily.

Its subcellular location is the cytoplasm. It carries out the reaction L-homoserine + ATP = O-phospho-L-homoserine + ADP + H(+). It participates in amino-acid biosynthesis; L-threonine biosynthesis; L-threonine from L-aspartate: step 4/5. Catalyzes the ATP-dependent phosphorylation of L-homoserine to L-homoserine phosphate. The chain is Homoserine kinase from Streptococcus mutans serotype c (strain ATCC 700610 / UA159).